Consider the following 514-residue polypeptide: piRNA biogenesis protein EXD1 (514 aa).

Residues 30-122 (LHAERTWMEK…HGKLCWLQVA (93 aa)) form the 3'-5' exonuclease domain. The disordered stretch occupies residues 384–422 (SLNKQATNPQHLPPTEEGETSEDSSNKLICTKSKGSEDQ).

This sequence belongs to the EXD1 family. Homodimer. Component of the PET complex, at least composed of EXD1, PIWIL2, TDRD12 and piRNAs.

The protein localises to the cytoplasm. Its function is as follows. RNA-binding component of the PET complex, a multiprotein complex required for the processing of piRNAs during spermatogenesis. The piRNA metabolic process mediates the repression of transposable elements during meiosis by forming complexes composed of piRNAs and Piwi proteins and governs the methylation and subsequent repression of transposable elements, preventing their mobilization, which is essential for the germline integrity. The PET complex is required during the secondary piRNAs metabolic process for the PIWIL2 slicing-triggered loading of PIWIL4 piRNAs. In the PET complex, EXD1 probably acts as an RNA adapter. EXD1 is an inactive exonuclease. In Homo sapiens (Human), this protein is piRNA biogenesis protein EXD1 (EXD1).